A 502-amino-acid chain; its full sequence is Probable mRNA-splicing protein ubp10 (502 aa).

The UBP-type; degenerate zinc finger occupies 56–153 (SQNLYLDTIN…YVMRPTFTKL (98 aa)). Residues Cys-89, Cys-92, His-108, and His-114 each contribute to the Zn(2+) site. One can recognise a USP domain in the interval 178–501 (VGMNNIKNND…ESFIQLWERS (324 aa)).

Belongs to the peptidase C19 family.

Its subcellular location is the nucleus. Its function is as follows. May play a role in mRNA splicing. It is unsure if the protein really exhibits hydrolase activity. Could be a competitor of ubiquitin C-terminal hydrolases (UCHs). This is Probable mRNA-splicing protein ubp10 (ubp10) from Schizosaccharomyces pombe (strain 972 / ATCC 24843) (Fission yeast).